The primary structure comprises 171 residues: 6,7-dimethyl-8-ribityllumazine synthase (171 aa).

5-amino-6-(D-ribitylamino)uracil contacts are provided by residues Phe30, 64-66 (ALE), and 88-90 (AVI). 93–94 (ET) contacts (2S)-2-hydroxy-3-oxobutyl phosphate. The active-site Proton donor is the His96. Residue Asn121 participates in 5-amino-6-(D-ribitylamino)uracil binding. Arg135 is a binding site for (2S)-2-hydroxy-3-oxobutyl phosphate.

It belongs to the DMRL synthase family.

The enzyme catalyses (2S)-2-hydroxy-3-oxobutyl phosphate + 5-amino-6-(D-ribitylamino)uracil = 6,7-dimethyl-8-(1-D-ribityl)lumazine + phosphate + 2 H2O + H(+). Its pathway is cofactor biosynthesis; riboflavin biosynthesis; riboflavin from 2-hydroxy-3-oxobutyl phosphate and 5-amino-6-(D-ribitylamino)uracil: step 1/2. In terms of biological role, catalyzes the formation of 6,7-dimethyl-8-ribityllumazine by condensation of 5-amino-6-(D-ribitylamino)uracil with 3,4-dihydroxy-2-butanone 4-phosphate. This is the penultimate step in the biosynthesis of riboflavin. The sequence is that of 6,7-dimethyl-8-ribityllumazine synthase from Polynucleobacter necessarius subsp. necessarius (strain STIR1).